Consider the following 660-residue polypeptide: Pentatricopeptide repeat-containing protein At4g20090 (660 aa).

15 PPR repeats span residues 76–110 (GDSTLSSMIESYANSGDFDSVEKLLSRIRLENRVI), 111–141 (IERSFIVVFRAYGKAHLPDKAVDLFHRMVDE), 147–181 (SVKSFNSVLNVIINEGLYHRGLEFYDYVVNSNMNM), 186–220 (NGLSFNLVIKALCKLRFVDRAIEVFRGMPERKCLP), 221–255 (DGYTYCTLMDGLCKEERIDEAVLLLDEMQSEGCSP), 256–290 (SPVIYNVLIDGLCKKGDLTRVTKLVDNMFLKGCVP), 291–325 (NEVTYNTLIHGLCLKGKLDKAVSLLERMVSSKCIP), 326–360 (NDVTYGTLINGLVKQRRATDAVRLLSSMEERGYHL), 361–395 (NQHIYSVLISGLFKEGKAEEAMSLWRKMAEKGCKP), 396–430 (NIVVYSVLVDGLCREGKPNEAKEILNRMIASGCLP), 431–465 (NAYTYSSLMKGFFKTGLCEEAVQVWKEMDKTGCSR), 466–500 (NKFCYSVLIDGLCGVGRVKEAMMVWSKMLTIGIKP), 501–535 (DTVAYSSIIKGLCGIGSMDAALKLYHEMLCQEEPK), 539–573 (DVVTYNILLDGLCMQKDISRAVDLLNSMLDRGCDP), and 574–609 (DVITCNTFLNTLSEKSNSCDKGRSFLEELVVRLLKR).

The protein belongs to the PPR family. P subfamily.

Its function is as follows. May play a role in embryogenesis. This chain is Pentatricopeptide repeat-containing protein At4g20090 (EMB1025), found in Arabidopsis thaliana (Mouse-ear cress).